The primary structure comprises 233 residues: Lipid A 4'-phosphatase (233 aa).

M1 is a topological domain (cytoplasmic). Residues 2–22 form a helical membrane-spanning segment; it reads LLFWMWWALLAVFRAFPGIDI. At 23–60 the chain is on the extracellular side; that stretch reads YFSQLFFVGADCDATAAAGNICGGFPYRDVAAFDLLRT. A helical membrane pass occupies residues 61-81; sequence VFFRLPYVVAIVMVWKLVECY. Over 82–94 the chain is Cytoplasmic; it reads QQHGATFNAERAQ. A helical transmembrane segment spans residues 95-115; sequence KLKVALGTLLIGPVLLVNVVL. Residues 116–149 lie on the Extracellular side of the membrane; that stretch reads KEHWGRPRPIQTDIFGGALHFAEAGSLAGKCVSN. A helical transmembrane segment spans residues 150 to 170; sequence CSFVSGEAASAGWLFCLLLFV. The Cytoplasmic segment spans residues 171 to 176; sequence PKSLRY. Residues 177–197 form a helical membrane-spanning segment; the sequence is AVAAPLAAISILTPAMRLSFG. At 198-200 the chain is on the extracellular side; it reads AHY. Residues 201 to 221 traverse the membrane as a helical segment; sequence LSDVVLGWLSSLVVFAALLAL. At 222–233 the chain is on the cytoplasmic side; that stretch reads TESQQHQKNSEI.

This sequence belongs to the lipid A LpxF 4'-phosphatase family.

The protein resides in the cell inner membrane. Its pathway is bacterial outer membrane biogenesis; LPS lipid A biosynthesis. Removes the 4'-phosphate moiety from lipid IV(A) (a tetraacylated precursor of lipid A). The polypeptide is Lipid A 4'-phosphatase (Rhizobium leguminosarum).